The chain runs to 618 residues: Isocitrate dehydrogenase kinase/phosphatase (618 aa).

ATP contacts are provided by residues 332 to 338 (APGIKGM) and K353. D388 is a catalytic residue.

This sequence belongs to the AceK family.

The protein localises to the cytoplasm. The enzyme catalyses L-seryl-[isocitrate dehydrogenase] + ATP = O-phospho-L-seryl-[isocitrate dehydrogenase] + ADP + H(+). Bifunctional enzyme which can phosphorylate or dephosphorylate isocitrate dehydrogenase (IDH) on a specific serine residue. This is a regulatory mechanism which enables bacteria to bypass the Krebs cycle via the glyoxylate shunt in response to the source of carbon. When bacteria are grown on glucose, IDH is fully active and unphosphorylated, but when grown on acetate or ethanol, the activity of IDH declines drastically concomitant with its phosphorylation. The sequence is that of Isocitrate dehydrogenase kinase/phosphatase from Methylibium petroleiphilum (strain ATCC BAA-1232 / LMG 22953 / PM1).